Here is a 429-residue protein sequence, read N- to C-terminus: MADTIIEAITAREVLDSRGNPTIEVDVYVESGDMGRAIVPSGASTGAFEALELRDGDKSRYGGKGVLKAVEHVNTTIAEALEGEDAADQVSIDRKLIELDGTENKGRLGANAILGVSLACAKAAAAAHDLPLYRYLGGVHAHVLPVPMMNILNGGKHAQNSTDFQEFMIMPVGAPSFREALRWGSEIYQSLKKVIHDRGGSTNVGDEGGFAPSLPTNEAALQIIMEAIERAGYKPGEQVMLAMDPACTELYKDGKYHLEREGRSLTSAEMVEYWDDIAARYPLISLEDGLAEEDWEGWKLLRARLGDRIQLVGDDFLVTNVKRLARAISEQAANSILIKLNQIGTLTETLDAISMANRAGWTAVVSHRSGESEDVTIADLVVATNAGQIKTGAPARTDRVAKYNQLLRIEEELGSAAHYAGMGAFRIRR.

Glutamine 165 contacts (2R)-2-phosphoglycerate. Glutamate 207 serves as the catalytic Proton donor. Positions 244, 287, and 314 each coordinate Mg(2+). (2R)-2-phosphoglycerate is bound by residues lysine 339, arginine 368, serine 369, and lysine 390. Lysine 339 (proton acceptor) is an active-site residue.

Belongs to the enolase family. Mg(2+) serves as cofactor.

Its subcellular location is the cytoplasm. The protein resides in the secreted. The protein localises to the cell surface. The enzyme catalyses (2R)-2-phosphoglycerate = phosphoenolpyruvate + H2O. The protein operates within carbohydrate degradation; glycolysis; pyruvate from D-glyceraldehyde 3-phosphate: step 4/5. Its function is as follows. Catalyzes the reversible conversion of 2-phosphoglycerate (2-PG) into phosphoenolpyruvate (PEP). It is essential for the degradation of carbohydrates via glycolysis. The protein is Enolase of Roseiflexus sp. (strain RS-1).